We begin with the raw amino-acid sequence, 579 residues long: Deleted in azoospermia protein 4 (579 aa).

Residues 1 to 10 are compositionally biased toward polar residues; sequence MSAANPETPN. A disordered region spans residues 1–27; the sequence is MSAANPETPNSTISREASTQSSSAAAS. The segment covering 11-27 has biased composition (low complexity); the sequence is STISREASTQSSSAAAS. Residues 40–115 form the RRM 1 domain; the sequence is NTVFVGGIDA…KKLKLGPAIR (76 aa). Residues 163–175 are compositionally biased toward polar residues; that stretch reads QHVQSAANPETPN. The segment at 163 to 192 is disordered; the sequence is QHVQSAANPETPNSTISREASTQSSSAAAS. Over residues 176–192 the composition is skewed to low complexity; that stretch reads STISREASTQSSSAAAS. The RRM 2 domain maps to 205–280; it reads NTVFVGGIDA…KKLKLGPAIR (76 aa). DAZ domains are found at residues 332–355, 356–379, 380–403, 404–427, 428–451, 452–475, 476–499, 500–523, and 524–547; these read AYSA…YNYQ, EYPT…YNYQ, PFPA…YNYQ, and AFPA…YNYQ.

It belongs to the RRM DAZ family. As to quaternary structure, forms a heterodimer with BOLL and DAZL. Interacts with PUM2, DAZAP1, DAZAP2, DZIP1 and DZIP3. Testis-specific. Expression restricted to premeiotic germ cells, particularly in spermatogonia (at protein level).

Its subcellular location is the cytoplasm. The protein resides in the nucleus. Its function is as follows. RNA-binding protein that plays an essential role in spermatogenesis. May act by binding to the 3'-UTR of mRNAs and regulating their translation. The chain is Deleted in azoospermia protein 4 (DAZ4) from Homo sapiens (Human).